The chain runs to 167 residues: Large ribosomal subunit protein uL5 (167 aa).

It belongs to the universal ribosomal protein uL5 family. Part of the 50S ribosomal subunit; contacts the 5S rRNA and probably tRNA. Forms a bridge to the 30S subunit in the 70S ribosome.

Its function is as follows. This is one of the proteins that bind and probably mediate the attachment of the 5S RNA into the large ribosomal subunit, where it forms part of the central protuberance. In the 70S ribosome it contacts protein S13 of the 30S subunit (bridge B1b), connecting the 2 subunits; this bridge is implicated in subunit movement. May contact the P site tRNA; the 5S rRNA and some of its associated proteins might help stabilize positioning of ribosome-bound tRNAs. The polypeptide is Large ribosomal subunit protein uL5 (Methanoculleus marisnigri (strain ATCC 35101 / DSM 1498 / JR1)).